A 343-amino-acid chain; its full sequence is GTPase Obg (343 aa).

The Obg domain occupies 1 to 159 (MKFLDQAKVY…LNIWLRLKLI (159 aa)). Positions 160–327 (ADAGLVGLPN…VLRALMTVIA (168 aa)) constitute an OBG-type G domain. GTP contacts are provided by residues 166–173 (GLPNAGKS), 191–195 (FTTLH), 212–215 (DIPG), 279–282 (SQVD), and 308–310 (SAV). 2 residues coordinate Mg(2+): serine 173 and threonine 193.

The protein belongs to the TRAFAC class OBG-HflX-like GTPase superfamily. OBG GTPase family. As to quaternary structure, monomer. Requires Mg(2+) as cofactor.

The protein resides in the cytoplasm. Its function is as follows. An essential GTPase which binds GTP, GDP and possibly (p)ppGpp with moderate affinity, with high nucleotide exchange rates and a fairly low GTP hydrolysis rate. Plays a role in control of the cell cycle, stress response, ribosome biogenesis and in those bacteria that undergo differentiation, in morphogenesis control. The chain is GTPase Obg from Mesorhizobium japonicum (strain LMG 29417 / CECT 9101 / MAFF 303099) (Mesorhizobium loti (strain MAFF 303099)).